The sequence spans 127 residues: Small ribosomal subunit protein uS13 (127 aa).

Residues 99-127 (RGQRTRTNARTRRGRRGQAIGIKKKTLKK) are disordered.

Belongs to the universal ribosomal protein uS13 family. In terms of assembly, part of the 30S ribosomal subunit. Forms a loose heterodimer with protein S19. Forms two bridges to the 50S subunit in the 70S ribosome.

Located at the top of the head of the 30S subunit, it contacts several helices of the 16S rRNA. In the 70S ribosome it contacts the 23S rRNA (bridge B1a) and protein L5 of the 50S subunit (bridge B1b), connecting the 2 subunits; these bridges are implicated in subunit movement. Contacts the tRNAs in the A and P-sites. The polypeptide is Small ribosomal subunit protein uS13 (Roseiflexus castenholzii (strain DSM 13941 / HLO8)).